The following is a 351-amino-acid chain: MTRQNTSESDNTQRPPIPQYDTVDDIDELTDAMDKEDHHHHHHHHEHHHQHQGIAQYDTVEEVETLETVHHRTSLNQEVPTPQRRSHPQYDNLDDIDDQEYITEVEVKSNRGSTLTTRPHVTIKQDEIEDIGERQVTVIEIASQKGSTKRVAPRKDYAPSIPLPEHPAQQSAPPTQQSRPQTTSHKPPNPEMEFDIGVKNIAPVLIHKMNMDDRDPKDSAQYLNTSFFEVFNEPSEQYHSIACVWTLSFKIFEIVRIYSYKILTLIFGLIIAFLGGILFALFAFLNIWIFRPILILTRMAFAQIVLIWPMFLIYIVRPFFYSVGAIFSTARLHTSRGEQVVEVWEKHIHHV.

Over residues 1–14 the composition is skewed to polar residues; sequence MTRQNTSESDNTQR. Disordered stretches follow at residues 1 to 55, 71 to 93, and 144 to 193; these read MTRQ…QGIA, HRTS…YDNL, and QKGS…PEME. Topologically, residues 1 to 261 are cytoplasmic; the sequence is MTRQNTSESD…FEIVRIYSYK (261 aa). The span at 22 to 31 shows a compositional bias: acidic residues; it reads TVDDIDELTD. The segment covering 38-51 has biased composition (basic residues); it reads HHHHHHHHEHHHQH. A compositionally biased stretch (low complexity) spans 167–184; sequence PAQQSAPPTQQSRPQTTS. The segment at residues 262–290 is an intramembrane region (helical); the sequence is ILTLIFGLIIAFLGGILFALFAFLNIWIF. Residues 291-351 are Cytoplasmic-facing; the sequence is RPILILTRMA…EVWEKHIHHV (61 aa).

Belongs to the caveolin family. In terms of assembly, homooligomer. Expressed in intracellular bodies in intestinal cells.

It is found in the golgi apparatus membrane. It localises to the cell membrane. Its subcellular location is the membrane. The protein localises to the caveola. The protein resides in the apical cell membrane. Functionally, may act as a scaffolding protein within caveolar membranes. Interacts directly with G-protein alpha subunits and can regulate their activity. Thought to have a role in the uptake of lipids and proteins in the intestinal cells; operates in the apical uptake of lipid markers and trafficking of yolk proteins. Affects fecundity and egg laying. This Caenorhabditis elegans protein is Caveolin-2 (cav-2).